The sequence spans 57 residues: Large ribosomal subunit protein bL32c (57 aa).

It belongs to the bacterial ribosomal protein bL32 family.

It is found in the plastid. The protein resides in the chloroplast. This is Large ribosomal subunit protein bL32c from Phalaenopsis aphrodite subsp. formosana (Moth orchid).